A 53-amino-acid polypeptide reads, in one-letter code: UPF0391 membrane protein PSEEN0090 (53 aa).

2 consecutive transmembrane segments (helical) span residues 4–24 (WAITFLIIAIVAAVLGFGGIA) and 29–49 (GIAKILFIIFLVLFVASFFFG).

The protein belongs to the UPF0391 family.

Its subcellular location is the cell membrane. This is UPF0391 membrane protein PSEEN0090 from Pseudomonas entomophila (strain L48).